A 205-amino-acid polypeptide reads, in one-letter code: ATP-dependent Clp protease proteolytic subunit (205 aa).

Serine 108 functions as the Nucleophile in the catalytic mechanism. Histidine 133 is a catalytic residue.

The protein belongs to the peptidase S14 family. As to quaternary structure, fourteen ClpP subunits assemble into 2 heptameric rings which stack back to back to give a disk-like structure with a central cavity, resembling the structure of eukaryotic proteasomes.

It localises to the cytoplasm. The catalysed reaction is Hydrolysis of proteins to small peptides in the presence of ATP and magnesium. alpha-casein is the usual test substrate. In the absence of ATP, only oligopeptides shorter than five residues are hydrolyzed (such as succinyl-Leu-Tyr-|-NHMec, and Leu-Tyr-Leu-|-Tyr-Trp, in which cleavage of the -Tyr-|-Leu- and -Tyr-|-Trp bonds also occurs).. In terms of biological role, cleaves peptides in various proteins in a process that requires ATP hydrolysis. Has a chymotrypsin-like activity. Plays a major role in the degradation of misfolded proteins. This chain is ATP-dependent Clp protease proteolytic subunit, found in Alcanivorax borkumensis (strain ATCC 700651 / DSM 11573 / NCIMB 13689 / SK2).